Reading from the N-terminus, the 367-residue chain is Peptide chain release factor 1 (367 aa).

At Gln-243 the chain carries N5-methylglutamine.

Belongs to the prokaryotic/mitochondrial release factor family. Methylated by PrmC. Methylation increases the termination efficiency of RF1.

It is found in the cytoplasm. Functionally, peptide chain release factor 1 directs the termination of translation in response to the peptide chain termination codons UAG and UAA. This is Peptide chain release factor 1 from Acidovorax sp. (strain JS42).